The chain runs to 944 residues: Protocadherin gamma-C5 (944 aa).

An N-terminal signal peptide occupies residues 1 to 29 (MGPKTLPQLAGKWQVLCMLSLCCWGWVSG). Cadherin domains follow at residues 30-133 (QLRY…SPSF), 134-242 (ATPE…APTF), 243-350 (QSSV…APEV), 351-454 (LLAS…APRF), 455-564 (NQQL…APAV), and 571-677 (WEHS…MPKS). At 30 to 693 (QLRYSVVEES…PPERSDLTLY (664 aa)) the chain is on the extracellular side. N265, N443, and N547 each carry an N-linked (GlcNAc...) asparagine glycan. The chain crosses the membrane as a helical span at residues 694 to 714 (LIVALATVSLLSLVTFTFLSA). At 715 to 944 (KCLQGNADGD…KKKSGKKEKK (230 aa)) the chain is on the cytoplasmic side. 3 disordered regions span residues 722-747 (DGDG…QSSP), 812-853 (SNTL…WPNN), and 914-944 (ATLT…KEKK). Residues 820–853 (QQAPPNTDWRFSQAQRPGTSGSQNGDDTGTWPNN) are compositionally biased toward polar residues. The span at 934-944 (NKKKSGKKEKK) shows a compositional bias: basic residues.

The protein resides in the cell membrane. Its function is as follows. Potential calcium-dependent cell-adhesion protein. May be involved in the establishment and maintenance of specific neuronal connections in the brain. The sequence is that of Protocadherin gamma-C5 (PCDHGC5) from Homo sapiens (Human).